Consider the following 338-residue polypeptide: Tetraacyldisaccharide 4'-kinase (338 aa).

51–58 serves as a coordination point for ATP; that stretch reads HVGGAGKT.

Belongs to the LpxK family.

It catalyses the reaction a lipid A disaccharide + ATP = a lipid IVA + ADP + H(+). Its pathway is glycolipid biosynthesis; lipid IV(A) biosynthesis; lipid IV(A) from (3R)-3-hydroxytetradecanoyl-[acyl-carrier-protein] and UDP-N-acetyl-alpha-D-glucosamine: step 6/6. Transfers the gamma-phosphate of ATP to the 4'-position of a tetraacyldisaccharide 1-phosphate intermediate (termed DS-1-P) to form tetraacyldisaccharide 1,4'-bis-phosphate (lipid IVA). The chain is Tetraacyldisaccharide 4'-kinase from Bradyrhizobium diazoefficiens (strain JCM 10833 / BCRC 13528 / IAM 13628 / NBRC 14792 / USDA 110).